Reading from the N-terminus, the 66-residue chain is Conotoxin Cl14.1a (66 aa).

The first 19 residues, 1-19, serve as a signal peptide directing secretion; sequence MNVTAMFIVLLLTMPLTDG. Positions 20-49 are excised as a propeptide; that stretch reads FNIRAINGGELFGLVQRDAGNALDHGFYRR.

The protein belongs to the conotoxin L superfamily. In terms of processing, contains 2 disulfide bonds. In terms of tissue distribution, expressed by the venom duct.

It localises to the secreted. Functionally, probable neurotoxin with unknown target. Possibly targets ion channels. This peptide could be considered as an apoptosis activator in some cancers (tested on lung and breast cancer cell lines). Provokes the decrease of H1299 lung cancer cells viability after 24 hours treatment, and induces a high Bax/Bcl-2 ratio, which suggests that this peptide can activate apoptosis in H1299 cells. In addition, H1299 and H1437 lung cancer cell lines treated with this peptide have decreased cell viability, activated caspases, and reduced expression of the pro-survival protein NF-kappa-B (NFKB1), indicating activation of apoptosis. In synergy with MicroRNA-101-3p, this synthetic peptide inhibits breast cancer cells (SK-BR-3 and MCF-7) migration, invasion, and proliferation through suppressing the expression of the methyltransferase EZH2. In parallel, this synergy treatment is able to promote the apoptosis of breast cancer cells. Against microbes, this synthetic toxin (at micromolar concentrations) lowers viability and inhibits host cell invasion by the opportunistic parasite Toxoplasma gondii (tachyzoite form). In addition, it permits T.gondii intracellular replication to decrease while viability of the host cell is unaffected. This Californiconus californicus (California cone) protein is Conotoxin Cl14.1a.